Consider the following 407-residue polypeptide: Bifunctional enzyme IspD/IspF (407 aa).

The tract at residues 1–246 (MQPLAEATTI…RQDHVSFPDI (246 aa)) is 2-C-methyl-D-erythritol 4-phosphate cytidylyltransferase. Positions 247-407 (RTGNGYDVHS…TVIYPGEVPE (161 aa)) are 2-C-methyl-D-erythritol 2,4-cyclodiphosphate synthase. Asp-253 and His-255 together coordinate a divalent metal cation. Residues 253–255 (DVH) and 279–280 (HS) each bind 4-CDP-2-C-methyl-D-erythritol 2-phosphate. His-287 lines the a divalent metal cation pocket. 4-CDP-2-C-methyl-D-erythritol 2-phosphate is bound by residues 301-303 (DIG), 377-380 (TTNE), Phe-384, and Arg-387.

The protein in the N-terminal section; belongs to the IspD/TarI cytidylyltransferase family. IspD subfamily. In the C-terminal section; belongs to the IspF family. The cofactor is a divalent metal cation.

The catalysed reaction is 2-C-methyl-D-erythritol 4-phosphate + CTP + H(+) = 4-CDP-2-C-methyl-D-erythritol + diphosphate. It carries out the reaction 4-CDP-2-C-methyl-D-erythritol 2-phosphate = 2-C-methyl-D-erythritol 2,4-cyclic diphosphate + CMP. Its pathway is isoprenoid biosynthesis; isopentenyl diphosphate biosynthesis via DXP pathway; isopentenyl diphosphate from 1-deoxy-D-xylulose 5-phosphate: step 2/6. The protein operates within isoprenoid biosynthesis; isopentenyl diphosphate biosynthesis via DXP pathway; isopentenyl diphosphate from 1-deoxy-D-xylulose 5-phosphate: step 4/6. Its function is as follows. Bifunctional enzyme that catalyzes the formation of 4-diphosphocytidyl-2-C-methyl-D-erythritol from CTP and 2-C-methyl-D-erythritol 4-phosphate (MEP) (IspD), and catalyzes the conversion of 4-diphosphocytidyl-2-C-methyl-D-erythritol 2-phosphate (CDP-ME2P) to 2-C-methyl-D-erythritol 2,4-cyclodiphosphate (ME-CPP) with a corresponding release of cytidine 5-monophosphate (CMP) (IspF). This chain is Bifunctional enzyme IspD/IspF, found in Brucella anthropi (strain ATCC 49188 / DSM 6882 / CCUG 24695 / JCM 21032 / LMG 3331 / NBRC 15819 / NCTC 12168 / Alc 37) (Ochrobactrum anthropi).